A 189-amino-acid chain; its full sequence is GTPase NRas (189 aa).

10 to 17 (GAGGVGKS) contacts GTP. An Effector region motif is present at residues 32–40 (YDPTIEDSY). Residues 57–61 (DTAGQ) and 116–119 (NKCD) contribute to the GTP site. The interval 166-185 (YRMKKLNSNEDGNQGCMGLS) is hypervariable region. Cys-181 carries S-palmitoyl cysteine lipidation. A lipid anchor (S-farnesyl cysteine) is attached at Cys-186. A propeptide spans 187–189 (IVM) (removed in mature form).

The protein belongs to the small GTPase superfamily. Ras family. In terms of processing, palmitoylated by the ZDHHC9-GOLGA7 complex. Depalmitoylated by ABHD17A, ABHD17B and ABHD17C. A continuous cycle of de- and re-palmitoylation regulates rapid exchange between plasma membrane and Golgi.

It is found in the cell membrane. The protein resides in the golgi apparatus membrane. It carries out the reaction GTP + H2O = GDP + phosphate + H(+). Its activity is regulated as follows. Alternates between an inactive form bound to GDP and an active form bound to GTP. Activated by a guanine nucleotide-exchange factor (GEF) and inactivated by a GTPase-activating protein (GAP). Functionally, ras proteins bind GDP/GTP and possess intrinsic GTPase activity. This Gallus gallus (Chicken) protein is GTPase NRas (NRAS).